The primary structure comprises 130 residues: Small ribosomal subunit protein uS9 (130 aa).

The segment at 111 to 130 (VERKKPGLKKARKASQFSKR) is disordered. The segment covering 116 to 130 (PGLKKARKASQFSKR) has biased composition (basic residues).

The protein belongs to the universal ribosomal protein uS9 family.

This chain is Small ribosomal subunit protein uS9, found in Lactococcus lactis subsp. lactis (strain IL1403) (Streptococcus lactis).